We begin with the raw amino-acid sequence, 207 residues long: Ion-translocating oxidoreductase complex subunit B (207 aa).

The segment at 1 to 29 (MLDLSIIAYLLIAICLIALIFGALLGYFS) is hydrophobic. Residues 35–93 (EADPIVDQIDAILPQSQCGQCGYPGCKPYAEAIANGDQITKCVPGGQPLVVKIAELMGV) enclose the 4Fe-4S domain. [4Fe-4S] cluster is bound by residues C52, C55, C60, C76, C116, C119, C122, C126, C146, C149, C152, and C156. 4Fe-4S ferredoxin-type domains are found at residues 107 to 136 (KVAL…GTNK) and 137 to 166 (AMHT…MIKV).

This sequence belongs to the 4Fe4S bacterial-type ferredoxin family. RnfB subfamily. The complex is composed of six subunits: RnfA, RnfB, RnfC, RnfD, RnfE and RnfG. Requires [4Fe-4S] cluster as cofactor.

It is found in the cell inner membrane. Functionally, part of a membrane-bound complex that couples electron transfer with translocation of ions across the membrane. This Haemophilus ducreyi (strain 35000HP / ATCC 700724) protein is Ion-translocating oxidoreductase complex subunit B.